The chain runs to 338 residues: Holliday junction branch migration complex subunit RuvB (338 aa).

The large ATPase domain (RuvB-L) stretch occupies residues methionine 1–tyrosine 181. Residues leucine 20, arginine 21, glycine 62, lysine 65, threonine 66, threonine 67, glutamate 128 to phenylalanine 130, arginine 171, tyrosine 181, and arginine 218 contribute to the ATP site. A Mg(2+)-binding site is contributed by threonine 66. A small ATPAse domain (RuvB-S) region spans residues serine 182–glycine 252. The segment at glutamate 255 to valine 338 is head domain (RuvB-H). Residues arginine 310 and arginine 315 each contribute to the DNA site.

The protein belongs to the RuvB family. Homohexamer. Forms an RuvA(8)-RuvB(12)-Holliday junction (HJ) complex. HJ DNA is sandwiched between 2 RuvA tetramers; dsDNA enters through RuvA and exits via RuvB. An RuvB hexamer assembles on each DNA strand where it exits the tetramer. Each RuvB hexamer is contacted by two RuvA subunits (via domain III) on 2 adjacent RuvB subunits; this complex drives branch migration. In the full resolvosome a probable DNA-RuvA(4)-RuvB(12)-RuvC(2) complex forms which resolves the HJ.

The protein localises to the cytoplasm. The catalysed reaction is ATP + H2O = ADP + phosphate + H(+). Functionally, the RuvA-RuvB-RuvC complex processes Holliday junction (HJ) DNA during genetic recombination and DNA repair, while the RuvA-RuvB complex plays an important role in the rescue of blocked DNA replication forks via replication fork reversal (RFR). RuvA specifically binds to HJ cruciform DNA, conferring on it an open structure. The RuvB hexamer acts as an ATP-dependent pump, pulling dsDNA into and through the RuvAB complex. RuvB forms 2 homohexamers on either side of HJ DNA bound by 1 or 2 RuvA tetramers; 4 subunits per hexamer contact DNA at a time. Coordinated motions by a converter formed by DNA-disengaged RuvB subunits stimulates ATP hydrolysis and nucleotide exchange. Immobilization of the converter enables RuvB to convert the ATP-contained energy into a lever motion, pulling 2 nucleotides of DNA out of the RuvA tetramer per ATP hydrolyzed, thus driving DNA branch migration. The RuvB motors rotate together with the DNA substrate, which together with the progressing nucleotide cycle form the mechanistic basis for DNA recombination by continuous HJ branch migration. Branch migration allows RuvC to scan DNA until it finds its consensus sequence, where it cleaves and resolves cruciform DNA. This chain is Holliday junction branch migration complex subunit RuvB, found in Caldanaerobacter subterraneus subsp. tengcongensis (strain DSM 15242 / JCM 11007 / NBRC 100824 / MB4) (Thermoanaerobacter tengcongensis).